A 350-amino-acid polypeptide reads, in one-letter code: Probable poly-beta-1,6-N-acetyl-D-glucosamine export protein (350 aa).

10 helical membrane passes run 7–29, 44–66, 79–101, 116–138, 145–167, 187–204, 211–233, 243–262, 269–291, and 306–328; these read ELVYLRAIICAIIIVTHLLTQIT, FYIRNIVIFGTPCFIILSQLLTT, TRVKYILIPYILMGLFYSYSESL, LLGQWYGYFIVVIMQFFILSYII, LFNSKILLLLSFILQQSFLYYFT, IIFGWIFYFFLGAYMGYN, FLERYLVIMIVLAVATYFVFIAL, SFSYSLTPYNSIMFIVILGI, MLFNTIQMISAFSFFIYLLHPII, and TMVFLAISLLFILGLCIGVGMIL.

This sequence belongs to the acyltransferase 3 family.

It is found in the cell membrane. Its function is as follows. Presumably involved in the export of the biofilm adhesin polysaccharide poly-beta-1,6-N-acetyl-D-glucosamine (PNAG, also referred to as PIA) across the cell membrane. The sequence is that of Probable poly-beta-1,6-N-acetyl-D-glucosamine export protein (icaC) from Staphylococcus aureus (strain MRSA252).